A 447-amino-acid polypeptide reads, in one-letter code: Ribosomal protein uS12 methylthiotransferase RimO (447 aa).

An MTTase N-terminal domain is found at 10–120 (PKVGFVSLGC…VVNAVHDVVP (111 aa)). [4Fe-4S] cluster-binding residues include Cys-19, Cys-55, Cys-84, Cys-153, Cys-157, and Cys-160. The 239-residue stretch at 139-377 (LTPRHYAYLK…MAHQQAISAA (239 aa)) folds into the Radical SAM core domain. Residues 380–447 (QMKIGKEIEV…DEYDLWAEML (68 aa)) form the TRAM domain.

It belongs to the methylthiotransferase family. RimO subfamily. Requires [4Fe-4S] cluster as cofactor.

Its subcellular location is the cytoplasm. The catalysed reaction is L-aspartate(89)-[ribosomal protein uS12]-hydrogen + (sulfur carrier)-SH + AH2 + 2 S-adenosyl-L-methionine = 3-methylsulfanyl-L-aspartate(89)-[ribosomal protein uS12]-hydrogen + (sulfur carrier)-H + 5'-deoxyadenosine + L-methionine + A + S-adenosyl-L-homocysteine + 2 H(+). Its function is as follows. Catalyzes the methylthiolation of an aspartic acid residue of ribosomal protein uS12. This chain is Ribosomal protein uS12 methylthiotransferase RimO, found in Pseudomonas syringae pv. syringae (strain B728a).